A 3674-amino-acid polypeptide reads, in one-letter code: Dystrophin-1 (3674 aa).

The segment at 1–25 (MLFSGASTAKPKKDEKKDKKSDRDP) is disordered. Basic and acidic residues predominate over residues 11–25 (PKKDEKKDKKSDRDP). Residues 30-39 (QEWVFVRWAN) form an actin-binding region. One can recognise a Calponin-homology (CH) domain in the interval 129-234 (EKLSEAIKQW…YLMSLYLAMI (106 aa)). The tract at residues 265-325 (SQPSTSSSSA…KSGKSKKARR (61 aa)) is disordered. 3 Spectrin repeats span residues 327–435 (EQLA…VLQQ), 436–541 (QIHL…KLDG), and 612–656 (CELV…TLVK). Basic and acidic residues predominate over residues 655–674 (VKSGKADVKQVQESQNEQKE). Disordered regions lie at residues 655–689 (VKSGKADVKQVQESQNEQKEQPASSEGLSTDTEGE), 968–991 (NSQMSNETVEKAETRKAEMEEKRR), 1587–1606 (ASAEKAPAPELRDARLSSPS), 1796–1833 (LSATEKKPVETVKSTIPDRPEVPEEPEKSSPDRTSRSS), and 2387–2466 (MNDS…GSTG). Residues 675–685 (QPASSEGLSTD) are compositionally biased toward polar residues. Residues 975-991 (TVEKAETRKAEMEEKRR) show a composition bias toward basic and acidic residues. A compositionally biased stretch (basic and acidic residues) spans 1796-1830 (LSATEKKPVETVKSTIPDRPEVPEEPEKSSPDRTS). Residues 2391-2411 (GGDTTESRSTVVEMTSVHTKQ) are compositionally biased toward polar residues. 4 Spectrin repeats span residues 2576–2673 (RNEM…VLEA), 2725–2789 (FKTL…RLEK), 2792–2905 (QEWE…RLKK), and 2926–3032 (QRLQ…AVRN). The region spanning 3047–3081 (QSVTLPWQRAISKSNLLPYYIEQTSEKTQWEHPVW) is the WW domain. The ZZ-type zinc-finger motif lies at 3301–3357 (KHASKCNVCKMFPIIGIRYRCLTCFNCDLCQNCFFSQRTAKSHRTNHPMQEYCEKTT). Zn(2+)-binding residues include cysteine 3306, cysteine 3309, cysteine 3321, cysteine 3324, cysteine 3330, cysteine 3333, histidine 3343, and histidine 3347. Disordered stretches follow at residues 3481-3522 (STME…TQSQ) and 3568-3645 (KQQA…QMQN). Polar residues predominate over residues 3568–3579 (KQQAPLSTNSLL).

In terms of assembly, component of the dystrophin glycoprotein complex (DGC). Interacts with dyb-1 and stn-1 to form the DGC. Interacts with stn-2. Expressed in body wall, head, pharyngeal and vulval muscles, from late embryogenesis to adulthood (at protein level).

The protein resides in the cell membrane. It is found in the sarcolemma. Its subcellular location is the cytoplasm. The protein localises to the cytoskeleton. Functionally, plays a role in cholinergic transmission and as a functional partner of dystrobrevin (dyb-1), necessary for muscle maintenance. Required for neuronal positioning. May play a role in the localization of slo-1 near dense bodies in the muscle. In Caenorhabditis elegans, this protein is Dystrophin-1 (dys-1).